A 230-amino-acid chain; its full sequence is Urease accessory protein UreF (230 aa).

This sequence belongs to the UreF family. UreD, UreF and UreG form a complex that acts as a GTP-hydrolysis-dependent molecular chaperone, activating the urease apoprotein by helping to assemble the nickel containing metallocenter of UreC. The UreE protein probably delivers the nickel.

Its subcellular location is the cytoplasm. Its function is as follows. Required for maturation of urease via the functional incorporation of the urease nickel metallocenter. The sequence is that of Urease accessory protein UreF from Cupriavidus metallidurans (strain ATCC 43123 / DSM 2839 / NBRC 102507 / CH34) (Ralstonia metallidurans).